The chain runs to 569 residues: Urease subunit alpha (569 aa).

The region spanning Gly131–Phe569 is the Urease domain. Positions 136, 138, and 219 each coordinate Ni(2+). At Lys219 the chain carries N6-carboxylysine. Residue His221 coordinates substrate. Residues His248 and His274 each coordinate Ni(2+). His322 functions as the Proton donor in the catalytic mechanism. Asp362 is a binding site for Ni(2+).

The protein belongs to the metallo-dependent hydrolases superfamily. Urease alpha subunit family. Heterotrimer of UreA (gamma), UreB (beta) and UreC (alpha) subunits. Three heterotrimers associate to form the active enzyme. Requires Ni cation as cofactor. Post-translationally, carboxylation allows a single lysine to coordinate two nickel ions.

The protein resides in the cytoplasm. The catalysed reaction is urea + 2 H2O + H(+) = hydrogencarbonate + 2 NH4(+). Its pathway is nitrogen metabolism; urea degradation; CO(2) and NH(3) from urea (urease route): step 1/1. In Roseobacter denitrificans (strain ATCC 33942 / OCh 114) (Erythrobacter sp. (strain OCh 114)), this protein is Urease subunit alpha.